The following is an 815-amino-acid chain: uncharacterized protein (815 aa).

Positions 31–57 form a DNA-binding region, zn(2)-C6 fungal-type; that stretch reads CDMCRRKKIKCDGLRPCKNCKAGKLEC. The helical transmembrane segment at 560-580 threads the bilayer; it reads YWTTVYCGFSTIVTLIFAALL. Disordered regions lie at residues 646 to 668 and 769 to 792; these read ESNV…SNTQ and DPDV…FNPT. Polar residues predominate over residues 780-792; that stretch reads SSSLNNSTPFNPT.

Its subcellular location is the cytoplasm. The protein resides in the nucleus membrane. This is an uncharacterized protein from Schizosaccharomyces pombe (strain 972 / ATCC 24843) (Fission yeast).